A 254-amino-acid chain; its full sequence is PAXIP1-associated glutamate-rich protein 1 (254 aa).

2 disordered regions span residues 1 to 111 (MSLA…PPSE) and 127 to 254 (LQAE…QRKY). Basic and acidic residues predominate over residues 45 to 62 (KAEDEGEGGREETEREGS). Residues 78-98 (EPAEEDSEDWCVPCSDEEVEL) are compositionally biased toward acidic residues. A sufficient for interaction with NCOA1 region spans residues 116–160 (YELLAAHGTLELQAEILPRRPPTPEAQSEEERSDEEPEAKEEEEE). Thr-138 bears the Phosphothreonine mark. A compositionally biased stretch (acidic residues) spans 142 to 159 (QSEEERSDEEPEAKEEEE). 2 positions are modified to phosphoserine: Ser-143 and Ser-148. The interval 161–254 (KPHMPTEFDF…SSLFPRQRKY (94 aa)) is sufficient for interaction with ESR1. The segment covering 195 to 223 (QKREARLDKVLSDMKRHKKLEEQILRTGR) has biased composition (basic and acidic residues). Ser-237 carries the post-translational modification Phosphoserine.

Component of the KMT2 family MLL2/MLL3 complex (also named ASCOM complex), at least composed of the HMTs KMT2D and/or KMT2C, the common subunits ASH2L, RBBP5, WDR5 and DPY30, and the complex type-specific subunits PAXIP1/PTIP, PAGR1, NCOA6 and KDM6A; PAXIP1 is required for the association with the MLL2/MLL3 complex. Forms a constitutive complex with PAXIP1/PTIP independently of the MLL2/MLL3 complex. Interacts with NCOA1, ESR1, NR3C1, AR. Ubiquitously expressed.

The protein localises to the nucleus. Its function is as follows. Its association with the histone methyltransferase MLL2/MLL3 complex is suggesting a role in epigenetic transcriptional activation. However, in association with PAXIP1/PTIP is proposed to function at least in part independently of the MLL2/MLL3 complex. Proposed to be recruited by PAXIP1 to sites of DNA damage where the PAGR1:PAXIP1 complex is required for cell survival in response to DNA damage independently of the MLL2/MLL3 complex. However, its function in DNA damage has been questioned. During immunoglobulin class switching in activated B-cells is involved in transcription regulation of downstream switch regions at the immunoglobulin heavy-chain (Igh) locus independently of the MLL2/MLL3 complex. Involved in both estrogen receptor-regulated gene transcription and estrogen-stimulated G1/S cell-cycle transition. Acts as a transcriptional cofactor for nuclear hormone receptors. Inhibits the induction properties of several steroid receptors such as NR3C1, AR and PPARG; the mechanism of inhibition appears to be gene-dependent. The polypeptide is PAXIP1-associated glutamate-rich protein 1 (PAGR1) (Homo sapiens (Human)).